Here is a 1894-residue protein sequence, read N- to C-terminus: Plexin-A2 (1894 aa).

Positions 1–34 (MEQRRPWPRALEVDSRSVVLLSVVWVLLAPPAAG) are cleaved as a signal peptide. The 474-residue stretch at 35–508 (MPQFSTFHSE…SERQVTRVPV (474 aa)) folds into the Sema domain. Over 35 to 1237 (MPQFSTFHSE…VISDSLLTLP (1203 aa)) the chain is Extracellular. N-linked (GlcNAc...) asparagine glycans are attached at residues asparagine 76 and asparagine 91. Intrachain disulfides connect cysteine 94–cysteine 103, cysteine 129–cysteine 137, cysteine 284–cysteine 405, cysteine 300–cysteine 356, cysteine 374–cysteine 393, cysteine 511–cysteine 528, cysteine 517–cysteine 559, cysteine 520–cysteine 537, cysteine 531–cysteine 543, and cysteine 594–cysteine 613. The N-linked (GlcNAc...) asparagine glycan is linked to asparagine 327. N-linked (GlcNAc...) asparagine glycosylation is found at asparagine 598, asparagine 696, and asparagine 756. 4 IPT/TIG domains span residues 858–951 (PQIT…QYTF), 954–1037 (PSVL…QFEY), 1041–1139 (PRVQ…KFIY), and 1143–1228 (PTFE…SVSV). N-linked (GlcNAc...) asparagine glycosylation is present at asparagine 1205. Residues 1238-1258 (AIVSIAAGGSLLLIIVIIVLI) traverse the membrane as a helical segment. At 1259-1894 (AYKRKSREND…QLINAMSIES (636 aa)) the chain is on the cytoplasmic side. The stretch at 1261 to 1310 (KRKSRENDLTLKRLQMQMDNLESRVALECKEAFAELQTDINELTSDLDRS) forms a coiled coil. Residue serine 1612 is modified to Phosphoserine.

This sequence belongs to the plexin family. In terms of assembly, homodimer. The PLXNA2 homodimer interacts with a SEMA6A homodimer, giving rise to a heterotetramer. Interacts directly with NRP1 and NRP2. Interacts with RND1. Detected in fetal brain.

It is found in the cell membrane. In terms of biological role, coreceptor for SEMA3A and SEMA6A. Necessary for signaling by SEMA6A and class 3 semaphorins and subsequent remodeling of the cytoskeleton. Plays a role in axon guidance, invasive growth and cell migration. Class 3 semaphorins bind to a complex composed of a neuropilin and a plexin. The plexin modulates the affinity of the complex for specific semaphorins, and its cytoplasmic domain is required for the activation of down-stream signaling events in the cytoplasm. The sequence is that of Plexin-A2 (PLXNA2) from Homo sapiens (Human).